The primary structure comprises 296 residues: Release factor glutamine methyltransferase (296 aa).

S-adenosyl-L-methionine contacts are provided by residues 133–137 (GTGSG), D156, and N201. 201 to 204 (NPPY) contacts substrate.

The protein belongs to the protein N5-glutamine methyltransferase family. PrmC subfamily.

The enzyme catalyses L-glutaminyl-[peptide chain release factor] + S-adenosyl-L-methionine = N(5)-methyl-L-glutaminyl-[peptide chain release factor] + S-adenosyl-L-homocysteine + H(+). Functionally, methylates the class 1 translation termination release factors RF1/PrfA and RF2/PrfB on the glutamine residue of the universally conserved GGQ motif. In Rhodopirellula baltica (strain DSM 10527 / NCIMB 13988 / SH1), this protein is Release factor glutamine methyltransferase.